We begin with the raw amino-acid sequence, 1191 residues long: MEAMSPQQETLGGQPGRSSSLTGVSRLAGGSCTKKKMKTLAERRRSAPSLILDKALQKRPTTRDSPSASVDTCTFLSSLVCSNRTLLIDGRAELKRGLQRQERHLFLFNDLFVVAKIKYNNNFKIKNKIKLTDMWTASCVDEVGEGNTNAMKSFVLGWPTVNFVATFSSPEQKDKWLSLLQRYINLEKEKDYPKSIPLKIFAKDIGNCAYSKTITVMNSDTANEVINMSLPMLGITGSERDYQLWVNSGKEEAPYPLIGHEYPYGIKMSHLRDSALLTPGSKDSTTPFNLQEPFLMEQLPREMQCQFILKPSRLAAAQQLSDSGHKTFKRRRSIINWAFWRGSSTHLDNLPSSPTSPMPGQLFGISLPNICENDNLPKPVLDMLFFLNQKGPLTKGIFRQSANVKSCRELKEKLNSGVEVHLDCESIFVIASVLKDFLRNIPGSIFSSDLYDHWVSVMDQGNDEEKINTVQRLLDQLPRANVVLLRYLFGVLHNIEQHSSSNQMTAFNLAVCVAPSILWPPASSSPELENEFTKKVSLLIQFLIENCLRIFGEEITSLFREVSVRCDTRENASDISCFQLNDSSYDSLENELNEDVDAPCSDLVKKLGQGSRSMDSVLTLSDYDLDQPEVEGLLTLSDFDLAHSKDEDVQMKRPLESKPVNILVYTKIPLRDHARAPSAMCTPSYLSTAAANAAKSLRRHRRCSEPSIDYLDSKLSYLREFYQKKLRKSSCDAILSQKDEDYLKQNQPLQEEGKTCFKQSLVTGTDVSKKNATTQNTKKKSLSGSEGNHVKLFPKSKPVAISVASYSPMSSQDHSKNQPFDVNTSGYSPPHTADALKGPRTHRRCSEPNIEDQNRKLTYLRGIYSKKQHKTSCEAGLLHGEEDYLKRHKSLQMEGQKLINQSLVMGIEVGKSSATNQNTEKVLPPRLNLCPRTSYSSLSSPGTSPSGSSVSSQDSAFSQISEHSVFTPTETSSPIDCTFQAQRKREDLSPDFSNASHVSGMPGPSSGQACSRPAYTKKDTMEWHSQMHSVTLHPSTWLRNGVASLKNWSLKKKAKAARPEEEKIASPKGPLEPPPHASGVPEANSLQEEQKDLPLRAAEGLSPVQSAQRCSSSPFQDSERHCSSPFSLVESRLKLCMKSHEEIEPGSQSSSGSLPWERASASSWTLEDATSPDSGPTVVCDIEDRYLTKDI.

Polar residues predominate over residues 1–23; it reads MEAMSPQQETLGGQPGRSSSLTG. The tract at residues 1 to 45 is disordered; the sequence is MEAMSPQQETLGGQPGRSSSLTGVSRLAGGSCTKKKMKTLAERRR. Ser46 is subject to Phosphoserine. One can recognise a PH domain in the interval 78–180; sequence SLVCSNRTLL…EQKDKWLSLL (103 aa). A Ras-associating domain is found at 194–295; sequence KSIPLKIFAK…TPFNLQEPFL (102 aa). Residues 365–551 form the Rho-GAP domain; sequence ISLPNICEND…FLIENCLRIF (187 aa). Ser704 and Ser730 each carry phosphoserine. Disordered regions lie at residues 768 to 791, 926 to 1014, 1052 to 1123, and 1140 to 1191; these read SKKN…NHVK, RLNL…SRPA, KKAK…RHCS, and HEEI…TKDI. Low complexity predominate over residues 934–961; that stretch reads SYSSLSSPGTSPSGSSVSSQDSAFSQIS. 2 stretches are compositionally biased toward polar residues: residues 962–981 and 1103–1116; these read EHSV…TFQA and PVQS…SPFQ. Basic and acidic residues predominate over residues 1182 to 1191; the sequence is IEDRYLTKDI.

In terms of tissue distribution, expressed predominantly in the brain. Lower expression is found in lymph nodes.

In terms of biological role, GTPase activator for the Rho-type GTPases by converting them to an inactive GDP-bound state. The polypeptide is Rho GTPase-activating protein 20 (ARHGAP20) (Homo sapiens (Human)).